A 345-amino-acid chain; its full sequence is Ferrochelatase (345 aa).

Fe cation contacts are provided by histidine 215 and glutamate 296.

This sequence belongs to the ferrochelatase family.

Its subcellular location is the cytoplasm. The enzyme catalyses heme b + 2 H(+) = protoporphyrin IX + Fe(2+). Its pathway is porphyrin-containing compound metabolism; protoheme biosynthesis; protoheme from protoporphyrin-IX: step 1/1. Functionally, catalyzes the ferrous insertion into protoporphyrin IX. The chain is Ferrochelatase from Rhodopseudomonas palustris (strain ATCC BAA-98 / CGA009).